Reading from the N-terminus, the 393-residue chain is Selenide, water dikinase (393 aa).

Residues 1-21 are disordered; it reads MSEKEGKVIPETNGMKRPRFD. C42 is an active-site residue. ATP contacts are provided by residues K45, 68 to 70, D93, D116, and 167 to 170; these read GMD and GGQT. Mg(2+) is bound at residue D70. Mg(2+) is bound at residue D116. Position 273 (D273) interacts with Mg(2+).

It belongs to the selenophosphate synthase 1 family. Class I subfamily. Homodimer. Mg(2+) is required as a cofactor.

It catalyses the reaction hydrogenselenide + ATP + H2O = selenophosphate + AMP + phosphate + 2 H(+). In terms of biological role, synthesizes selenophosphate from selenide and ATP. This Trypanosoma brucei brucei (strain 927/4 GUTat10.1) protein is Selenide, water dikinase.